The sequence spans 133 residues: Meiotically up-regulated gene 15 protein (133 aa).

The protein resides in the cytoplasm. The protein localises to the nucleus. Functionally, has a role in meiosis. This chain is Meiotically up-regulated gene 15 protein (mug15), found in Schizosaccharomyces pombe (strain 972 / ATCC 24843) (Fission yeast).